Reading from the N-terminus, the 108-residue chain is Nitrogenase-stabilizing/protective protein NifW (108 aa).

The protein belongs to the NifW family. Homotrimer; associates with NifD.

Its function is as follows. May protect the nitrogenase Fe-Mo protein from oxidative damage. The chain is Nitrogenase-stabilizing/protective protein NifW from Zymomonas mobilis subsp. mobilis (strain ATCC 31821 / ZM4 / CP4).